The primary structure comprises 377 residues: G-protein coupled receptor 54 (377 aa).

Residues 1 to 49 lie on the Extracellular side of the membrane; the sequence is MYSSEELWNSTEQVWINGSGTNFSLGRHEDDEEEEGDKHPFFTDAWLVP. N-linked (GlcNAc...) asparagine glycans are attached at residues asparagine 9, asparagine 17, and asparagine 22. The helical transmembrane segment at 50-70 threads the bilayer; it reads LFFSLIMLVGLVGNSLVIYVI. Residues 71-91 are Cytoplasmic-facing; that stretch reads SKHRQMRTATNFYIANLAATD. The chain crosses the membrane as a helical span at residues 92-112; that stretch reads IIFLVCCVPFTATLYPLPGWI. At 113–119 the chain is on the extracellular side; that stretch reads FGNFMCK. A disulfide bridge links cysteine 118 with cysteine 198. The chain crosses the membrane as a helical span at residues 120 to 140; the sequence is FVAFLQQVTVQATCITLTAMS. The Cytoplasmic portion of the chain corresponds to 141-160; it reads GDRCYVTVYPLKSLRHRTPK. Residues 161–181 form a helical membrane-spanning segment; it reads VAMIVSICIWIGSFVLSTPIL. Over 182 to 209 the chain is Extracellular; it reads MYQRIEEGYWYGPRQYCMERFPSKTHER. A helical membrane pass occupies residues 210 to 230; sequence AFILYQFIAAYLLPVLTISFC. At 231 to 269 the chain is on the cytoplasmic side; sequence YTLMVKRVGQPTVEPVDNNYQVNLLSERTISIRSKVSKM. A helical transmembrane segment spans residues 270–290; the sequence is VVVIVLLFAICWGPIQIFVLF. At 291–305 the chain is on the extracellular side; it reads QSFYPNYQPNYATYK. The helical transmembrane segment at 306–328 threads the bilayer; sequence IKTWANCMSYANSSVNPIVYGFM. Topologically, residues 329–377 are cytoplasmic; sequence GASFQKSFRKTFPFLFKHKVRDSSMASRTANAEIKFVAAEEGNNNNAVN.

This sequence belongs to the G-protein coupled receptor 1 family. As to expression, expressed in a significantly high percentage (45-60%) of mature GnRH1, GnRH2, and GnRH3 neurons and in immature GnRH3 neurons, which had migrated to the vicinity of their final locations in the brain. Only 5% of immature GnRH1 and GnRH2 neurons have receptor transcripts.

The protein resides in the cell membrane. Receptor speculated to be essential for sexual development. May regulate gonadotropin-releasing hormone (GnRH) secretion. The receptor expression could be a 'stop signal' for GnRH1, GnRH2, and GnRH3 neuronal migration, leading to suppression of cell growth and modulation of GnRH secretion, which is important for normal sexual development. In Oreochromis niloticus (Nile tilapia), this protein is G-protein coupled receptor 54 (gpr54).